Consider the following 201-residue polypeptide: NADH-ubiquinone oxidoreductase 21.3 kDa subunit (201 aa).

In terms of assembly, complex I is composed of about 40 different subunits.

It localises to the mitochondrion inner membrane. It carries out the reaction a ubiquinone + NADH + 5 H(+)(in) = a ubiquinol + NAD(+) + 4 H(+)(out). Functionally, transfer of electrons from NADH to the respiratory chain. The immediate electron acceptor for the enzyme is believed to be ubiquinone. The chain is NADH-ubiquinone oxidoreductase 21.3 kDa subunit from Neurospora crassa (strain ATCC 24698 / 74-OR23-1A / CBS 708.71 / DSM 1257 / FGSC 987).